We begin with the raw amino-acid sequence, 636 residues long: uncharacterized protein (636 aa).

A run of 3 helical transmembrane segments spans residues A12 to I32, I34 to G54, and I75 to F95. Residues K112 to S231 form the RCK N-terminal domain.

The protein localises to the cell membrane. This is an uncharacterized protein from Methanothermus fervidus (strain ATCC 43054 / DSM 2088 / JCM 10308 / V24 S).